The sequence spans 276 residues: Small ribosomal subunit protein uS3 (276 aa).

Positions 39–110 (IRRETMKFLK…KINIKIKEIK (72 aa)) constitute a KH type-2 domain.

This sequence belongs to the universal ribosomal protein uS3 family. As to quaternary structure, part of the 30S ribosomal subunit. Forms a tight complex with proteins S10 and S14.

Functionally, binds the lower part of the 30S subunit head. Binds mRNA in the 70S ribosome, positioning it for translation. The protein is Small ribosomal subunit protein uS3 of Borrelia recurrentis (strain A1).